Reading from the N-terminus, the 550-residue chain is Chaperonin GroEL (550 aa).

Residues 30–33, Lys51, 87–91, Gly415, and Asp495 each bind ATP; these read TLGP and DGTTT.

The protein belongs to the chaperonin (HSP60) family. In terms of assembly, forms a cylinder of 14 subunits composed of two heptameric rings stacked back-to-back. Interacts with the co-chaperonin GroES.

Its subcellular location is the cytoplasm. The catalysed reaction is ATP + H2O + a folded polypeptide = ADP + phosphate + an unfolded polypeptide.. Together with its co-chaperonin GroES, plays an essential role in assisting protein folding. The GroEL-GroES system forms a nano-cage that allows encapsulation of the non-native substrate proteins and provides a physical environment optimized to promote and accelerate protein folding. In Dechloromonas aromatica (strain RCB), this protein is Chaperonin GroEL.